A 609-amino-acid polypeptide reads, in one-letter code: UvrABC system protein C (609 aa).

The GIY-YIG domain occupies 16–94; sequence SSPGVYRMYD…IKQYMPKYNV (79 aa). Residues 203-238 enclose the UVR domain; that stretch reads QQVMSVLVQKMEQASSDMRYEQAALYRDQITALRRV.

It belongs to the UvrC family. Interacts with UvrB in an incision complex.

Its subcellular location is the cytoplasm. The UvrABC repair system catalyzes the recognition and processing of DNA lesions. UvrC both incises the 5' and 3' sides of the lesion. The N-terminal half is responsible for the 3' incision and the C-terminal half is responsible for the 5' incision. The sequence is that of UvrABC system protein C from Shewanella pealeana (strain ATCC 700345 / ANG-SQ1).